Consider the following 85-residue polypeptide: MKVTLIAILTCAAVLVLHTTAAEELEAESQLMEVGMPDTELAAVDEERLFECSVSCEIEKEGNKDCKKKKCKGGWKCKSNICVKV.

A signal peptide spans 1-22 (MKVTLIAILTCAAVLVLHTTAA). The propeptide occupies 23-48 (EELEAESQLMEVGMPDTELAAVDEER). 3 disulfide bridges follow: Cys52-Cys66, Cys56-Cys77, and Cys71-Cys82.

It belongs to the neurotoxin 12 (Hwtx-2) family. 02 (Hwtx-2) subfamily. In terms of tissue distribution, expressed by the venom gland.

The protein resides in the secreted. In terms of biological role, postsynaptic neurotoxin. This chain is U4-theraphotoxin-Hhn1s, found in Cyriopagopus hainanus (Chinese bird spider).